We begin with the raw amino-acid sequence, 275 residues long: Phosphate import ATP-binding protein PstB (275 aa).

An ABC transporter domain is found at 28–270; sequence IDCRDIRVFY…PREKRTEDYI (243 aa). 60-67 serves as a coordination point for ATP; it reads GPSGCGKS.

This sequence belongs to the ABC transporter superfamily. Phosphate importer (TC 3.A.1.7) family. In terms of assembly, the complex is composed of two ATP-binding proteins (PstB), two transmembrane proteins (PstC and PstA) and a solute-binding protein (PstS).

It is found in the cell inner membrane. The catalysed reaction is phosphate(out) + ATP + H2O = ADP + 2 phosphate(in) + H(+). Part of the ABC transporter complex PstSACB involved in phosphate import. Responsible for energy coupling to the transport system. The chain is Phosphate import ATP-binding protein PstB from Hyphomonas neptunium (strain ATCC 15444).